Consider the following 251-residue polypeptide: Capsid protein (251 aa).

A Bipartite nuclear localization signal motif is present at residues 3 to 20 (KRDLPWRSMAGTSKVSRN). A Nuclear localization signal motif is present at residues 35–49 (KAAEWVNRPMYRKPR). A zinc finger lies at 63–80 (CEGPCKVQSFEQRHDISH). The Nuclear export signal signature appears at 96–117 (ITHRVGKRFCVKSVYILGKIWM). Residues 195 to 242 (KRFWKVNNHVVYNHQEAGKYENHTENALLLYMACTHASNPVYATLKIR) carry the Bipartite nuclear localization signal motif.

The protein belongs to the geminiviridae capsid protein family. Homomultimer. Binds to single-stranded and double-stranded viral DNA. Interacts (via nuclear localization signals) with host importin alpha-1a.

It localises to the virion. It is found in the host nucleus. Functionally, encapsidates the viral DNA into characteristic twinned ('geminate') particles. Binds the genomic viral ssDNA and shuttles it into and out of the cell nucleus. The CP of bipartite geminiviruses is not required for cell-to-cell or systemic movement. In Tomato mottle virus (isolate Florida) (ToMoV), this protein is Capsid protein.